The chain runs to 275 residues: MDERPVLFFDSGIGGLTVLREARVLIPEIQFIYVADDAGFPYGNWEENILKEHILNIFTNLLTRYNPALCVIACNTVSTLMMADLRQKFPHVPFVGTVPAIKSAAEQTKSGFISVLATPGTVKRAYTNELINSFAGQCHVQLVGSEKLAGFAEDHLRGKTIDSEALRKEILPCFVKKNGKCTDVIVLACTHYPFLINFFREQALWSVEWIDPAKAIAKHIRSLLPLSEKIHQKPIKKYQDFALLTSKNITASTEHLLKGFGLKLMKRVDFRIRDQ.

Substrate contacts are provided by residues aspartate 10 to serine 11 and tyrosine 42 to glycine 43. The Proton donor/acceptor role is filled by cysteine 74. Substrate is bound at residue asparagine 75–threonine 76. Catalysis depends on cysteine 189, which acts as the Proton donor/acceptor. Residue threonine 190 to histidine 191 participates in substrate binding.

It belongs to the aspartate/glutamate racemases family.

It catalyses the reaction L-glutamate = D-glutamate. It functions in the pathway cell wall biogenesis; peptidoglycan biosynthesis. Its function is as follows. Provides the (R)-glutamate required for cell wall biosynthesis. This chain is Glutamate racemase, found in Bartonella tribocorum (strain CIP 105476 / IBS 506).